A 619-amino-acid polypeptide reads, in one-letter code: Genetic interactor of prohibitins 3, mitochondrial (619 aa).

The N-terminal 55 residues, 1–55, are a transit peptide targeting the mitochondrion; the sequence is MLKAQIQTGLQLLQRAAVSHMRPSSCTSMLMRMRVHLAPRALQSQRSLSSSEFSP. A CP-type G domain is found at 162-372; it reads VAAVSDVMHS…IYDVPGFSSA (211 aa).

The protein belongs to the TRAFAC class YlqF/YawG GTPase family. GEP3 subfamily.

It localises to the mitochondrion. In terms of biological role, may be involved in the mitochondrial lipid metabolism. The protein is Genetic interactor of prohibitins 3, mitochondrial (GEP3) of Clavispora lusitaniae (strain ATCC 42720) (Yeast).